Reading from the N-terminus, the 554-residue chain is Valerianol synthase TPS1F (554 aa).

Mg(2+)-binding residues include Asp307 and Asp311. The short motif at Val326 to Asp330 is the DDXXD motif element. Mg(2+) is bound by residues Asp452, Ser456, and Glu460.

Belongs to the terpene synthase family. Mg(2+) serves as cofactor.

It catalyses the reaction (2E,6E)-farnesyl diphosphate + H2O = valerianol + diphosphate. It participates in secondary metabolite biosynthesis; terpenoid biosynthesis. Functionally, terpene synthase that catalyzes the biosynthesis of the terpene valerianol, which is a volatile compound of floral scent. This is Valerianol synthase TPS1F from Camellia hiemalis (Camellia).